The chain runs to 72 residues: Translation initiation factor IF-1 (72 aa).

In terms of domain architecture, S1-like spans 1–72; that stretch reads MTKEDSFEMH…SKGRIIFRSR (72 aa).

The protein belongs to the IF-1 family. As to quaternary structure, component of the 30S ribosomal translation pre-initiation complex which assembles on the 30S ribosome in the order IF-2 and IF-3, IF-1 and N-formylmethionyl-tRNA(fMet); mRNA recruitment can occur at any time during PIC assembly.

The protein localises to the cytoplasm. Its function is as follows. One of the essential components for the initiation of protein synthesis. Stabilizes the binding of IF-2 and IF-3 on the 30S subunit to which N-formylmethionyl-tRNA(fMet) subsequently binds. Helps modulate mRNA selection, yielding the 30S pre-initiation complex (PIC). Upon addition of the 50S ribosomal subunit IF-1, IF-2 and IF-3 are released leaving the mature 70S translation initiation complex. The sequence is that of Translation initiation factor IF-1 from Blochmanniella pennsylvanica (strain BPEN).